The following is a 442-amino-acid chain: Protein translocase subunit SecF (442 aa).

The disordered stretch occupies residues 1 to 39 (MASKAKTGRDDEATSAVELTEATESAVARTDGDSTTDTA). 6 consecutive transmembrane segments (helical) span residues 67–87 (WFGV…FRGF), 187–207 (ITKK…LYIT), 218–238 (AITA…LVGF), 243–263 (ATVI…VIVF), 301–321 (LIGV…LGVG), and 331–351 (LIGI…LLVT). The disordered stretch occupies residues 366–442 (VLKRRNSGSP…PTGKRNAGRR (77 aa)). A compositionally biased stretch (low complexity) spans 402 to 432 (QASSQSAPRAAQGSSKPAPGARPVRPVGTRR). Residues 433–442 (PTGKRNAGRR) are compositionally biased toward basic residues.

Belongs to the SecD/SecF family. SecF subfamily. As to quaternary structure, forms a complex with SecD. Part of the essential Sec protein translocation apparatus which comprises SecA, SecYEG and auxiliary proteins SecDF. Other proteins may also be involved.

It localises to the cell membrane. In terms of biological role, part of the Sec protein translocase complex. Interacts with the SecYEG preprotein conducting channel. SecDF uses the proton motive force (PMF) to complete protein translocation after the ATP-dependent function of SecA. The polypeptide is Protein translocase subunit SecF (Mycobacterium tuberculosis (strain CDC 1551 / Oshkosh)).